We begin with the raw amino-acid sequence, 475 residues long: Ribulose bisphosphate carboxylase large chain (475 aa).

The propeptide occupies Met1–Ser2. Pro3 carries the N-acetylproline modification. At Lys14 the chain carries N6,N6,N6-trimethyllysine. Asn123 and Thr173 together coordinate substrate. Lys175 acts as the Proton acceptor in catalysis. A substrate-binding site is contributed by Lys177. Mg(2+) contacts are provided by Lys201, Asp203, and Glu204. Lys201 is subject to N6-carboxylysine. Residue His294 is the Proton acceptor of the active site. Substrate-binding residues include Arg295, His327, and Ser379.

It belongs to the RuBisCO large chain family. Type I subfamily. In terms of assembly, heterohexadecamer of 8 large chains and 8 small chains; disulfide-linked. The disulfide link is formed within the large subunit homodimers. Requires Mg(2+) as cofactor. The disulfide bond which can form in the large chain dimeric partners within the hexadecamer appears to be associated with oxidative stress and protein turnover.

It is found in the plastid. The protein localises to the chloroplast. It carries out the reaction 2 (2R)-3-phosphoglycerate + 2 H(+) = D-ribulose 1,5-bisphosphate + CO2 + H2O. It catalyses the reaction D-ribulose 1,5-bisphosphate + O2 = 2-phosphoglycolate + (2R)-3-phosphoglycerate + 2 H(+). RuBisCO catalyzes two reactions: the carboxylation of D-ribulose 1,5-bisphosphate, the primary event in carbon dioxide fixation, as well as the oxidative fragmentation of the pentose substrate in the photorespiration process. Both reactions occur simultaneously and in competition at the same active site. The sequence is that of Ribulose bisphosphate carboxylase large chain from Illicium oligandrum (Star anise).